The sequence spans 126 residues: MARVKNTPVTRRRRKKILKLAKGYFGSKSTLYRTAHEQVMRALQYAYRDRKQNKRNFRRLWISRINAGAVQNGFKYSKLIHGLSLANVQLNRKVLADLAISEPTVFASYVELAKDAIANPAKYQVK.

This sequence belongs to the bacterial ribosomal protein bL20 family.

Functionally, binds directly to 23S ribosomal RNA and is necessary for the in vitro assembly process of the 50S ribosomal subunit. It is not involved in the protein synthesizing functions of that subunit. The chain is Large ribosomal subunit protein bL20 from Acholeplasma laidlawii (strain PG-8A).